The sequence spans 217 residues: Large ribosomal subunit protein uL4 (217 aa).

Residues Arg-42–Gln-100 are disordered.

It belongs to the universal ribosomal protein uL4 family. Part of the 50S ribosomal subunit.

In terms of biological role, one of the primary rRNA binding proteins, this protein initially binds near the 5'-end of the 23S rRNA. It is important during the early stages of 50S assembly. It makes multiple contacts with different domains of the 23S rRNA in the assembled 50S subunit and ribosome. Forms part of the polypeptide exit tunnel. The polypeptide is Large ribosomal subunit protein uL4 (Mycobacterium avium (strain 104)).